Here is a 25-residue protein sequence, read N- to C-terminus: Xenoposin precursor fragment R2 (25 aa).

Expressed by the skin glands.

The protein resides in the secreted. In terms of biological role, antimicrobial peptide. This is Xenoposin precursor fragment R2 from Xenopus ruwenzoriensis (Uganda clawed frog).